Reading from the N-terminus, the 243-residue chain is Transcription factor TFIIS homolog (243 aa).

The 125-residue stretch at 77–201 folds into the TFIIS central domain; that stretch reads MRDIIQMMFF…SQQKVAEKTS (125 aa). The TFIIS-type zinc finger occupies 202–242; that stretch reads QLYKCPNCKQRMCTYREVQTRALDEPSTIFCTCKKCGHEFI. Zn(2+) is bound by residues C206, C209, C234, and C237.

The protein belongs to the TFS-II family.

Functionally, putative initiation factor. Necessary for efficient transcription elongation past template-encoded arresting sites. In Ornithodoros (relapsing fever ticks), this protein is Transcription factor TFIIS homolog.